We begin with the raw amino-acid sequence, 467 residues long: Putative sulfoquinovose importer (467 aa).

12 helical membrane passes run 17-37 (IAYGMGDVGSNLMLCIGTLYL), 54-74 (IIFLVAKFFTAFTDMLTGFLL), 88-108 (PFILYAAVPAALIATLQFIAT), 121-141 (ALFMMFGLSYSLMNCSYGAMI), 160-180 (GGATIGLLICTVAFIPLQSLF), 185-205 (VGYACAALMFSIGGFIFMMLC), 238-258 (LLVLCIANLCTLAAFNIKLAI), 275-295 (WMGFFSMGCILIGVLLVPLTV), 303-323 (VYLAGMVLWAVGDILNYFWGS), 325-345 (SFTFVMFSCVAFFGTAFVNSL), 379-399 (ISAALAGFLPGIMLTQIGYVP), and 414-434 (LIFIWPCALAIIAALTMGFFY).

It belongs to the sodium:galactoside symporter (TC 2.A.2) family.

Its subcellular location is the cell inner membrane. In terms of biological role, could be involved in sulfoquinovose import. The polypeptide is Putative sulfoquinovose importer (yihO) (Escherichia coli (strain K12)).